Consider the following 363-residue polypeptide: Peptide chain release factor 1 (363 aa).

Residue glutamine 237 is modified to N5-methylglutamine.

Belongs to the prokaryotic/mitochondrial release factor family. In terms of processing, methylated by PrmC. Methylation increases the termination efficiency of RF1.

The protein resides in the cytoplasm. Its function is as follows. Peptide chain release factor 1 directs the termination of translation in response to the peptide chain termination codons UAG and UAA. This Mesoplasma florum (strain ATCC 33453 / NBRC 100688 / NCTC 11704 / L1) (Acholeplasma florum) protein is Peptide chain release factor 1.